The sequence spans 955 residues: Leucine--tRNA ligase (955 aa).

Residues 51-61 carry the 'HIGH' region motif; sequence PYLNGVLHAGH. Positions 647–651 match the 'KMSKS' region motif; that stretch reads KLSKS. Residue Lys650 participates in ATP binding.

This sequence belongs to the class-I aminoacyl-tRNA synthetase family.

It is found in the cytoplasm. The enzyme catalyses tRNA(Leu) + L-leucine + ATP = L-leucyl-tRNA(Leu) + AMP + diphosphate. The protein is Leucine--tRNA ligase of Methanococcus maripaludis (strain DSM 14266 / JCM 13030 / NBRC 101832 / S2 / LL).